Reading from the N-terminus, the 527-residue chain is Bifunctional purine biosynthesis protein PurH (527 aa).

An MGS-like domain is found at 1-149 (MASDFLPVRR…KNFARVAVAA (149 aa)).

It belongs to the PurH family.

The enzyme catalyses (6R)-10-formyltetrahydrofolate + 5-amino-1-(5-phospho-beta-D-ribosyl)imidazole-4-carboxamide = 5-formamido-1-(5-phospho-D-ribosyl)imidazole-4-carboxamide + (6S)-5,6,7,8-tetrahydrofolate. It catalyses the reaction IMP + H2O = 5-formamido-1-(5-phospho-D-ribosyl)imidazole-4-carboxamide. Its pathway is purine metabolism; IMP biosynthesis via de novo pathway; 5-formamido-1-(5-phospho-D-ribosyl)imidazole-4-carboxamide from 5-amino-1-(5-phospho-D-ribosyl)imidazole-4-carboxamide (10-formyl THF route): step 1/1. It functions in the pathway purine metabolism; IMP biosynthesis via de novo pathway; IMP from 5-formamido-1-(5-phospho-D-ribosyl)imidazole-4-carboxamide: step 1/1. The chain is Bifunctional purine biosynthesis protein PurH from Xanthomonas axonopodis pv. citri (strain 306).